Here is a 141-residue protein sequence, read N- to C-terminus: Myosin regulatory light chain cdc4 (141 aa).

Phosphoserine occurs at positions 2 and 6. 3 consecutive EF-hand domains span residues 3-38 (TDDS…CGQN), 74-109 (GDPE…LGEK), and 109-141 (KLSN…ILAN). Residues Asp-87, Asp-89, Thr-91, Met-93, and Glu-98 each coordinate Ca(2+).

In terms of assembly, binds to myosin II chains myo2 and myo3. Interacts with vps27 and a PI 4-kinase pik1. In terms of processing, phosphorylated on either Ser-2 or Ser-6 but not both. Phosphorylation is not essential for the function of the protein.

The protein resides in the cytoplasm. Functionally, involved in cytokinesis. Required for the formation and function of the contractile ring. This Schizosaccharomyces pombe (strain 972 / ATCC 24843) (Fission yeast) protein is Myosin regulatory light chain cdc4 (cdc4).